Consider the following 498-residue polypeptide: Glycylpeptide N-tetradecanoyltransferase 2 (498 aa).

The tract at residues 1–87 (MAEDSESAAS…QPPSKNSTIP (87 aa)) is disordered. Residues 15–32 (ELDDQDTCGIDGDNEEET) show a composition bias toward acidic residues. Ser38 carries the post-translational modification Phosphoserine. The segment covering 46-57 (KKKKKKQKRKKE) has biased composition (basic residues). A compositionally biased stretch (polar residues) spans 61-72 (SGGTKSDSASDS). Residues His117, Trp122, Leu250, Val252, Ser258, Arg260, Val261, and Ala262 each contribute to the tetradecanoyl-CoA site.

The protein belongs to the NMT family.

The protein localises to the cytoplasm. It is found in the membrane. It carries out the reaction N-terminal glycyl-[protein] + tetradecanoyl-CoA = N-tetradecanoylglycyl-[protein] + CoA + H(+). The enzyme catalyses N-terminal glycyl-L-lysyl-[protein] + tetradecanoyl-CoA = N-terminal glycyl-(N(6)-tetradecanoyl)-L-lysyl-[protein] + CoA + H(+). Adds a myristoyl group to the N-terminal glycine residue of certain cellular and viral proteins. Also able to mediate N-terminal lysine myristoylation of proteins: catalyzes myristoylation of ARF6 on both 'Gly-2' and 'Lys-3'. Lysine myristoylation is required to maintain ARF6 on membranes during the GTPase cycle. The protein is Glycylpeptide N-tetradecanoyltransferase 2 (NMT2) of Bos taurus (Bovine).